A 431-amino-acid polypeptide reads, in one-letter code: Light-independent protochlorophyllide reductase subunit N (431 aa).

[4Fe-4S] cluster contacts are provided by Cys-29, Cys-54, and Cys-114.

This sequence belongs to the BchN/ChlN family. As to quaternary structure, protochlorophyllide reductase is composed of three subunits; ChlL, ChlN and ChlB. Forms a heterotetramer of two ChlB and two ChlN subunits. [4Fe-4S] cluster serves as cofactor.

Its subcellular location is the plastid. It localises to the chloroplast. It carries out the reaction chlorophyllide a + oxidized 2[4Fe-4S]-[ferredoxin] + 2 ADP + 2 phosphate = protochlorophyllide a + reduced 2[4Fe-4S]-[ferredoxin] + 2 ATP + 2 H2O. It participates in porphyrin-containing compound metabolism; chlorophyll biosynthesis (light-independent). In terms of biological role, component of the dark-operative protochlorophyllide reductase (DPOR) that uses Mg-ATP and reduced ferredoxin to reduce ring D of protochlorophyllide (Pchlide) to form chlorophyllide a (Chlide). This reaction is light-independent. The NB-protein (ChlN-ChlB) is the catalytic component of the complex. The polypeptide is Light-independent protochlorophyllide reductase subunit N (Nephroselmis olivacea (Green alga)).